The sequence spans 179 residues: Phospholipase A2 (179 aa).

The N-terminal stretch at 1–21 (MHALRSSVLALWLCLHVSVRA) is a signal peptide. Positions 22–39 (WMTYRSANGLDEYEPEDR) are excised as a propeptide. The Ca(2+) site is built by tryptophan 47, glycine 49, and glycine 51. 5 cysteine pairs are disulfide-bonded: cysteine 48-cysteine 70, cysteine 69-cysteine 109, cysteine 76-cysteine 102, cysteine 100-cysteine 133, and cysteine 142-cysteine 150. The active site involves histidine 73. Aspartate 74 is a binding site for Ca(2+). Residue aspartate 103 is part of the active site.

This sequence belongs to the phospholipase A2 family. Group III subfamily. It depends on Ca(2+) as a cofactor. In terms of tissue distribution, expressed by the venom gland.

The protein localises to the secreted. It catalyses the reaction a 1,2-diacyl-sn-glycero-3-phosphocholine + H2O = a 1-acyl-sn-glycero-3-phosphocholine + a fatty acid + H(+). May potentiate Xylotoxin(1)-Xa1a DRG activation and cell lysis, since the orthologous A.mellifera PA2 potentiates Xylotoxin(1)-Xa1a DRG activation and cell lysis. In vivo, intraplantar injection in mice may potentiate spontaneous pain behaviors and paw swelling caused by Xylotoxin(1)-Xa1a, since the orthologous A.mellifera PA2 shows this effect. PLA2 catalyzes the calcium-dependent hydrolysis of the 2-acyl groups in 3-sn-phosphoglycerides. In Xylocopa aruana (Great carpenter bee), this protein is Phospholipase A2.